Consider the following 434-residue polypeptide: Xylose isomerase (434 aa).

Residues histidine 99 and aspartate 102 contribute to the active site. Mg(2+) contacts are provided by glutamate 230, glutamate 266, histidine 269, aspartate 294, aspartate 305, aspartate 307, and aspartate 337.

The protein belongs to the xylose isomerase family. In terms of assembly, homotetramer. The cofactor is Mg(2+).

It localises to the cytoplasm. It catalyses the reaction alpha-D-xylose = alpha-D-xylulofuranose. The polypeptide is Xylose isomerase (Dinoroseobacter shibae (strain DSM 16493 / NCIMB 14021 / DFL 12)).